Consider the following 449-residue polypeptide: Probable cysteine proteinase 224L (449 aa).

Residues cysteine 99, histidine 292, and asparagine 322 contribute to the active site. A helical transmembrane segment spans residues 429–449 (DTQIVFIFFLSVVILFIFIIL).

Belongs to the peptidase C1 family.

The protein localises to the membrane. Functionally, probable cysteine protease. This chain is Probable cysteine proteinase 224L, found in Acheta domesticus (House cricket).